A 327-amino-acid polypeptide reads, in one-letter code: Solute-binding protein SPO1773 (327 aa).

An N-terminal signal peptide occupies residues 1 to 26 (MTISFKGLARGVACAALVLAALPAAA). 3-hydroxybenzoate contacts are provided by residues 39-41 (HTW), Arg-150, 170-172 (RIT), and Asp-211.

The protein belongs to the bacterial solute-binding protein 7 family. As to quaternary structure, the complex is comprised of an extracytoplasmic solute-binding protein and a heteromeric permease formed by two transmembrane proteins.

It is found in the periplasm. In terms of biological role, solute-binding protein that binds 3,4-dihydroxybenzoate and 3-hydroxybenzoate (in vitro). Probably part of a tripartite ATP-independent periplasmic (TRAP) transport system that mediates solute transport into the cytoplasm. This is Solute-binding protein SPO1773 from Ruegeria pomeroyi (strain ATCC 700808 / DSM 15171 / DSS-3) (Silicibacter pomeroyi).